A 711-amino-acid chain; its full sequence is Zinc finger protein 175 (711 aa).

The segment covering 1 to 11 (MPADVNLSQKP) has biased composition (polar residues). Residues 1–21 (MPADVNLSQKPQVLGPEKQDG) are disordered. In terms of domain architecture, KRAB spans 27–98 (VSFEDVTVDF…EAEVSHQRCQ (72 aa)). Residues 279 to 301 (DGCSECGGSFTQKSHLFAQQRIH) form a C2H2-type 1; atypical zinc finger. Residues 307–329 (HECGKCGKAFMPQLKLSVYLTDH) form a C2H2-type 2; atypical zinc finger. A C2H2-type 3 zinc finger spans residues 335–357 (CICKECGKVFIQRSELLTHQKTH). The Nuclear localization signal motif lies at 359-362 (RKKP). C2H2-type zinc fingers lie at residues 363 to 385 (YKCHDCGKAFFQMLSLFRHQRTH), 391 to 413 (YECSECGKGFSQNSTLIIHQKIH), 419 to 441 (YACSECGKAFTQKSTLSLHQRIH), 447 to 469 (YVCIECGQAFIQKAHLIVHQRSH), 475 to 497 (YQCHNCGKSFISKSQLDIHHRIH), 503 to 525 (YECSDCGKTFTQKSHLNIHQKIH), 531 to 553 (HVCSECGKAFNQKSILSMHQRIH), 559 to 581 (YKCSECGKAFTSKSQFKEHQRIH), 587 to 609 (YVCTECGKAFNGRSNFHKHQITH), 615 to 637 (FVCYKCGKAFVQKSELITHQRTH), 643 to 665 (YECLDCGKSFSKKPQLKVHQRIH), and 671 to 693 (YVCSECGKAFNNRSNFNKHQTTH).

This sequence belongs to the krueppel C2H2-type zinc-finger protein family. In terms of tissue distribution, ubiquitous.

It localises to the cytoplasm. It is found in the nucleus. Down-regulates the expression of several chemokine receptors. Interferes with HIV-1 replication by suppressing Tat-induced viral LTR promoter activity. This Homo sapiens (Human) protein is Zinc finger protein 175 (ZNF175).